The chain runs to 111 residues: Large ribosomal subunit protein P2 (111 aa).

The disordered stretch occupies residues 81–111 (AAGGAAAPAAEEKKEEEKEESDEDMGFGLFD). The residue at position 101 (Ser101) is a Phosphoserine.

It belongs to the eukaryotic ribosomal protein P1/P2 family. As to quaternary structure, P1 and P2 exist as dimers at the large ribosomal subunit.

Plays an important role in the elongation step of protein synthesis. In Aspergillus fumigatus (strain ATCC MYA-4609 / CBS 101355 / FGSC A1100 / Af293) (Neosartorya fumigata), this protein is Large ribosomal subunit protein P2.